A 704-amino-acid polypeptide reads, in one-letter code: Fibulin-1 (704 aa).

Positions 1-25 (MDKLRGARPLRLLLLLLALLPALRG) are cleaved as a signal peptide. Intrachain disulfides connect C33/C59, C34/C66, C47/C67, C76/C107, C89/C108, C110/C134, C111/C141, C124/C142, C181/C191, C187/C200, C202/C215, C221/C234, C228/C243, C249/C261, C267/C280, C274/C289, C295/C307, C313/C326, C320/C335, C342/C355, C361/C374, C368/C383, C385/C398, C404/C416, C412/C425, C427/C440, C446/C455, C451/C464, C466/C480, C486/C499, C495/C508, C510/C524, C530/C543, C537/C552, and C557/C578. 3 consecutive Anaphylatoxin-like domains span residues 33 to 74 (CCDK…LEEH), 75 to 109 (YCSD…KCCY), and 110 to 142 (CCLL…RACC). N96 carries N-linked (GlcNAc...) asparagine glycosylation. The region spanning 177–216 (LHDGCRGGGPCSQQCRDTGSSYVCSCFVGYQLQPDGVNCE) is the EGF-like 1 domain. The 46-residue stretch at 217–262 (DINECITGTHSCGIGQTCVNTLGSFRCQRDTSCGTGYELTDDSRCK) folds into the EGF-like 2; calcium-binding domain. Residues 263–308 (DIDECETGTHNCPPDFICQNTPGSFRCRPKLQCMNGFIQDALGNCI) form the EGF-like 3; calcium-binding domain. The EGF-like 4; calcium-binding domain occupies 309–356 (DINECLSTNMPCPAGQICINTDGSYTCQRISPSCGRGYHLNEDGTRCV). Positions 357–399 (DVDECSSSDQPCGEGHVCINGPGNYRCECKSGYSFDVISRTCI) constitute an EGF-like 5; calcium-binding domain. The self-association and FN1-binding stretch occupies residues 357–441 (DVDECSSSDQ…KLSSDGRSCE (85 aa)). Residues 400–441 (DINECRRYPGRLCAHKCENTPGSYYCTCTMGFKLSSDGRSCE) form the EGF-like 6; calcium-binding domain. The 40-residue stretch at 442–481 (DLNECESSPCSQECANVYGSYQCYCRRGFQLSDIDGISCE) folds into the EGF-like 7; calcium-binding domain. The region spanning 482-525 (DIDECALPTGGHICSFRCINIPGSFQCTCPSTGYRLAPNARNCQ) is the EGF-like 8; calcium-binding domain. In terms of domain architecture, EGF-like 9; calcium-binding spans 526 to 579 (DIDECVAETHNCSFNETCFNIQGGFRCLSLECPENYRKSGDTVRLEKTDTIRCI). Residues N536 and N540 are each glycosylated (N-linked (GlcNAc...) asparagine).

The protein belongs to the fibulin family. Homomultimerizes and interacts with various extracellular matrix components.

The protein resides in the secreted. It localises to the extracellular space. It is found in the extracellular matrix. Incorporated into fibronectin-containing matrix fibers. May play a role in cell adhesion and migration along protein fibers within the extracellular matrix (ECM). Could be important for certain developmental processes and contribute to the supramolecular organization of ECM architecture, in particular to those of basement membranes. The protein is Fibulin-1 (FBLN1) of Gallus gallus (Chicken).